Consider the following 245-residue polypeptide: Exosome complex component RRP41 (245 aa).

Ala-2 bears the N-acetylalanine mark.

Belongs to the RNase PH family. Component of the RNA exosome core complex (Exo-9), composed of EXOSC1, EXOSC2, EXOSC3, EXOSC4, EXOSC5, EXOSC6, EXOSC7, EXOSC8 and EXOSC9; within the complex interacts with EXOSC2, EXOSC7 and EXOSC9. The catalytically inactive RNA exosome core complex (Exo-9) associates with the catalytic subunit EXOSC10/RRP6. Exo-9 may associate with DIS3 to form the nucleolar exosome complex, or DIS3L to form the cytoplasmic exosome complex. Exo-9 is formed by a hexameric base ring consisting of the heterodimers EXOSC4-EXOSC9, EXOSC5-EXOSC8 and EXOSC6-EXOSC7, and a cap ring consisting of EXOSC1, EXOSC2 and EXOSC3. The RNA exosome complex associates with cofactors C1D/RRP47, MPHOSPH6/MPP6 and MTREX/MTR4. Interacts with DDX60. Interacts with DIS3; the interaction is direct.

Its subcellular location is the cytoplasm. The protein localises to the nucleus. It is found in the nucleolus. It localises to the nucleoplasm. In terms of biological role, non-catalytic component of the RNA exosome complex which has 3'-&gt;5' exoribonuclease activity and participates in a multitude of cellular RNA processing and degradation events. In the nucleus, the RNA exosome complex is involved in proper maturation of stable RNA species such as rRNA, snRNA and snoRNA, in the elimination of RNA processing by-products and non-coding 'pervasive' transcripts, such as antisense RNA species and promoter-upstream transcripts (PROMPTs), and of mRNAs with processing defects, thereby limiting or excluding their export to the cytoplasm. The RNA exosome may be involved in Ig class switch recombination (CSR) and/or Ig variable region somatic hypermutation (SHM) by targeting AICDA deamination activity to transcribed dsDNA substrates. In the cytoplasm, the RNA exosome complex is involved in general mRNA turnover and specifically degrades inherently unstable mRNAs containing AU-rich elements (AREs) within their 3' untranslated regions, and in RNA surveillance pathways, preventing translation of aberrant mRNAs. It seems to be involved in degradation of histone mRNA. The catalytic inactive RNA exosome core complex of 9 subunits (Exo-9) is proposed to play a pivotal role in the binding and presentation of RNA for ribonucleolysis, and to serve as a scaffold for the association with catalytic subunits and accessory proteins or complexes. EXOSC4 binds to ARE-containing RNAs. In Homo sapiens (Human), this protein is Exosome complex component RRP41 (EXOSC4).